A 239-amino-acid polypeptide reads, in one-letter code: Suppressor of organelle fusion 1 (239 aa).

It belongs to the WD repeat WDR91 family. Interacts with sorf-2; the interaction is direct. Interacts with bec-1.

Its subcellular location is the early endosome. The protein resides in the late endosome. It localises to the cytoplasm. Together with sorf-2 negatively regulates the levels of phosphatidylinositol 3-phosphate (PtdIns3P) to enable the conversion of early endosomes to late endosomes. Binds to sorf-2 and the sorf-1-sorf-2 complex likely acts through bec-1, a non-catalytic subunit of phosphatidylinositol 3-kinase (PI3K), to suppress PI3K activity, thereby negatively regulating endosomal PtdIns3P levels. The sequence is that of Suppressor of organelle fusion 1 from Caenorhabditis elegans.